Here is a 418-residue protein sequence, read N- to C-terminus: Gamma-glutamyl phosphate reductase (418 aa).

This sequence belongs to the gamma-glutamyl phosphate reductase family.

It localises to the cytoplasm. The catalysed reaction is L-glutamate 5-semialdehyde + phosphate + NADP(+) = L-glutamyl 5-phosphate + NADPH + H(+). It functions in the pathway amino-acid biosynthesis; L-proline biosynthesis; L-glutamate 5-semialdehyde from L-glutamate: step 2/2. In terms of biological role, catalyzes the NADPH-dependent reduction of L-glutamate 5-phosphate into L-glutamate 5-semialdehyde and phosphate. The product spontaneously undergoes cyclization to form 1-pyrroline-5-carboxylate. The sequence is that of Gamma-glutamyl phosphate reductase from Chlorobium chlorochromatii (strain CaD3).